The sequence spans 464 residues: Septin homolog spn5 (464 aa).

The disordered stretch occupies residues 28–91 (QVDESSAKRS…VPNSNGKSIP (64 aa)). Basic and acidic residues-rich tracts occupy residues 41–54 (ESRKSKDVTRKEQI) and 69–81 (TAKDKKTEFKQDE). Positions 115 to 370 (NGIDINLIVV…DTFRTEKLVA (256 aa)) constitute a Septin-type G domain. The G1 motif stretch occupies residues 125-132 (GESSLGKT). Residues 125 to 132 (GESSLGKT), threonine 151, glycine 177, 257 to 265 (KADTMTSDE), glycine 304, and arginine 319 contribute to the GTP site. Residues 174 to 177 (DTPG) are G3 motif. Positions 256 to 259 (GKAD) are G4 motif. Residues 396-453 (LVEEALTKVMKEKYREKENNLELLETNLKTHHKDYKHALKKRITALEEEKNRLIKEIG) adopt a coiled-coil conformation.

It belongs to the TRAFAC class TrmE-Era-EngA-EngB-Septin-like GTPase superfamily. Septin GTPase family. In terms of assembly, component of the sporulation-specific septin complex composed of at least spn2, spn5, spn6 and spn7.

It localises to the nucleus. The protein resides in the forespore membrane. Septin-like protein involved in the correct orientation of forespore membrane extension during sporulation. This chain is Septin homolog spn5 (spn5), found in Schizosaccharomyces pombe (strain 972 / ATCC 24843) (Fission yeast).